The following is a 107-amino-acid chain: Cell cycle protein GpsB (107 aa).

Residues 32–65 (LDNVIQDYETYISEIEELKAEIERLKNQNTHPKS) are a coiled coil. The interval 57–80 (KNQNTHPKSPSTENRHAMVQPTRV) is disordered. Over residues 58–68 (NQNTHPKSPST) the composition is skewed to polar residues.

It belongs to the GpsB family. Forms polymers through the coiled coil domains. Interacts with PBP1, MreC and EzrA.

It localises to the cytoplasm. Divisome component that associates with the complex late in its assembly, after the Z-ring is formed, and is dependent on DivIC and PBP2B for its recruitment to the divisome. Together with EzrA, is a key component of the system that regulates PBP1 localization during cell cycle progression. Its main role could be the removal of PBP1 from the cell pole after pole maturation is completed. Also contributes to the recruitment of PBP1 to the division complex. Not essential for septum formation. In Streptococcus uberis (strain ATCC BAA-854 / 0140J), this protein is Cell cycle protein GpsB.